A 207-amino-acid polypeptide reads, in one-letter code: Peptidyl-tRNA hydrolase (207 aa).

Tyr-30 provides a ligand contact to tRNA. Catalysis depends on His-35, which acts as the Proton acceptor. TRNA-binding residues include Tyr-81, Asn-83, and Asn-129.

It belongs to the PTH family. In terms of assembly, monomer.

It localises to the cytoplasm. The catalysed reaction is an N-acyl-L-alpha-aminoacyl-tRNA + H2O = an N-acyl-L-amino acid + a tRNA + H(+). In terms of biological role, hydrolyzes ribosome-free peptidyl-tRNAs (with 1 or more amino acids incorporated), which drop off the ribosome during protein synthesis, or as a result of ribosome stalling. Functionally, catalyzes the release of premature peptidyl moieties from peptidyl-tRNA molecules trapped in stalled 50S ribosomal subunits, and thus maintains levels of free tRNAs and 50S ribosomes. The chain is Peptidyl-tRNA hydrolase from Bordetella avium (strain 197N).